The following is a 1221-amino-acid chain: 2-oxoglutarate dehydrogenase E1/E2 component (1221 aa).

The interval 2–40 is 2-oxoglutarate dehydrogenase E1, N-terminal part; sequence SSASTFGQNAWLVDEMFQQFQKDPKSVDKEWRELFEAQG. The segment at 22–107 is disordered; the sequence is QKDPKSVDKE…KLPEPGQTPI (86 aa). Positions 23–36 are enriched in basic and acidic residues; sequence KDPKSVDKEWRELF. Polar residues predominate over residues 41–52; sequence GPNTTPATTEAQ. Positions 41–89 are linker; that stretch reads GPNTTPATTEAQPSAPKESAKPAPKAAPAAKAAPRVETKPADKTAPKAK. Over residues 53 to 73 the composition is skewed to low complexity; sequence PSAPKESAKPAPKAAPAAKAA. The segment covering 74 to 90 has biased composition (basic and acidic residues); the sequence is PRVETKPADKTAPKAKE. The segment at 90–337 is succinyltransferase E2; it reads ESSVPQQPKL…LRTMSRLLTD (248 aa). Catalysis depends on His316, which acts as the Proton acceptor; for succinyltransferase activity. The segment at 338–1221 is 2-oxoglutarate dehydrogenase E1, C-terminal part; the sequence is DSFWDEIFDA…KQLIDEAFEA (884 aa). Arg544 lines the thiamine diphosphate pocket. 2-oxoglutarate contacts are provided by His583 and Ser608. Thiamine diphosphate contacts are provided by Ser608, Leu610, Asp645, Ala646, Ala647, and Asn678. Asp645 is a binding site for Mg(2+). Mg(2+) is bound by residues Asn678 and Ile680. Position 1017 (His1017) interacts with 2-oxoglutarate. Positions 1035, 1051, 1087, 1090, and 1144 each coordinate acetyl-CoA.

In the N-terminal section; belongs to the alpha-ketoglutarate dehydrogenase family. It in the C-terminal section; belongs to the 2-oxoacid dehydrogenase family. As to quaternary structure, homodimer. Part of an unusual ODH/PDH supercomplex, consisting of AceE (E1), AceF (E2), and Lpd (E3) together with OdhA (E1+E2). Interacts with the FHA domain of unphosphorylated OdhI via its C-terminal dehydrogenase domain. It depends on Mg(2+) as a cofactor. Requires thiamine diphosphate as cofactor.

The catalysed reaction is N(6)-[(R)-lipoyl]-L-lysyl-[protein] + 2-oxoglutarate + H(+) = N(6)-[(R)-S(8)-succinyldihydrolipoyl]-L-lysyl-[protein] + CO2. It carries out the reaction N(6)-[(R)-dihydrolipoyl]-L-lysyl-[protein] + succinyl-CoA = N(6)-[(R)-S(8)-succinyldihydrolipoyl]-L-lysyl-[protein] + CoA. It functions in the pathway carbohydrate metabolism; tricarboxylic acid cycle; succinyl-CoA from 2-oxoglutarate (dehydrogenase route): step 1/1. Its activity is regulated as follows. Inhibited by unphosphorylated OdhI, but not by phosphorylated OdhI. Its function is as follows. Catalyzes the E1 and E2 reactions as part of 2-oxoglutarate dehydrogenase (ODH) activity, to convert 2-oxoglutarate to succinyl-CoA and CO(2). OdhA has reductase activity with 2-oxoglutarate but does not react with pyruvate, and also displays transsuccinylase but no transacetylase activity. Since OdhA is not lipoylated, the succinyltransferase activity of its E2 domain is dependent on lipoyl residues of the acetyltransferase AceF. The polypeptide is 2-oxoglutarate dehydrogenase E1/E2 component (Corynebacterium glutamicum (strain ATCC 13032 / DSM 20300 / JCM 1318 / BCRC 11384 / CCUG 27702 / LMG 3730 / NBRC 12168 / NCIMB 10025 / NRRL B-2784 / 534)).